A 225-amino-acid chain; its full sequence is UPF0173 metal-dependent hydrolase PAE2160 (225 aa).

Belongs to the UPF0173 family.

The protein is UPF0173 metal-dependent hydrolase PAE2160 of Pyrobaculum aerophilum (strain ATCC 51768 / DSM 7523 / JCM 9630 / CIP 104966 / NBRC 100827 / IM2).